The sequence spans 2303 residues: Genome polyprotein (2303 aa).

Residues 3–14 (CKHGYPDVCPIC) fold into a zinc finger. The segment at 30-46 (DGEWYPTDLLCVDLDDD) is acidic. Positions 60–73 (MDWTDVPLIRDIVM) are theilo. Residues 74-93 (EPQGNSSSSDKSNSQSSGNE) are disordered. G77 carries N-myristoyl glycine; by host lipidation. The segment covering 78-92 (NSSSSDKSNSQSSGN) has biased composition (low complexity). C501 and C503 are disulfide-bonded. The tract at residues 1041–1047 (YYRQRLI) is host EIF4E binding. The region spanning 1283 to 1448 (IPLASLCEKF…CKTPAGMLDV (166 aa)) is the SF3 helicase domain. 1312-1319 (GAAGQGKS) contributes to the ATP binding site. The residue at position 1608 (Y1608) is an O-(5'-phospho-RNA)-tyrosine. A Peptidase C3 domain is found at 1636–1829 (NPVMDFELFC…AATIITKELI (194 aa)). Residues H1680, D1714, and C1793 each act as for protease 3C activity in the active site. A RdRp catalytic domain is found at 2071–2189 (NYVYDVDYSN…GTNYQIDFNL (119 aa)). Active-site for RdRp activity residues include D2077 and D2175.

The protein belongs to the picornaviruses polyprotein family. As to quaternary structure, interacts with host EIF4E. Interacts with the leader protein. Interacts with host RAN; the complex L-RAN recruits cellular kinases responsible for the L-induced nucleocytoplasmic trafficking inhibition. The complex L-RAN can further bind to the host exportins XPO1/CRM1 and CSE1L/CAS. Interacts with the protein 2A. Interacts with host RNASEL; this interaction prevents RNASEL activation by its substrate 2'-5' oligoadenylates. Post-translationally, phosphorylated. Specific enzymatic cleavages by the viral protease in vivo yield a variety of precursors and mature proteins. The polyprotein seems to be cotranslationally cleaved at the 2A/2B junction by a ribosomal skip from one codon to the next without formation of a peptide bond. This process would release the P1-2A peptide from the translational complex. In terms of processing, during virion maturation, immature virions are rendered infectious following cleavage of VP0 into VP4 and VP2. This maturation seems to be an autocatalytic event triggered by the presence of RNA in the capsid and is followed by a conformational change of the particle. Post-translationally, uridylylated by the polymerase and is covalently linked to the 5'-end of genomic RNA. This uridylylated form acts as a nucleotide-peptide primer for the polymerase. Myristoylation is required during RNA encapsidation and formation of the mature virus particle.

Its subcellular location is the virion. It is found in the host cytoplasm. It localises to the host nucleus. The protein resides in the host nucleolus. The protein localises to the host cytoplasmic vesicle membrane. The catalysed reaction is RNA(n) + a ribonucleoside 5'-triphosphate = RNA(n+1) + diphosphate. It carries out the reaction ATP + H2O = ADP + phosphate + H(+). The enzyme catalyses Selective cleavage of Gln-|-Gly bond in the poliovirus polyprotein. In other picornavirus reactions Glu may be substituted for Gln, and Ser or Thr for Gly.. Its function is as follows. Forms a complex with host RAN and probably binds to exportins carrying activated MAPK in order to mediate the hyperphosphorylation of host Phe/Gly containing nuclear pore proteins (Nups) resulting in cessation of active nucleocytoplasmic transport. Proteins with NLS signals fail to import, cellular mRNAs fail to export, and some proteins small enough for diffusion are not retained anymore (efflux). The resulting inhibition of cellular protein synthesis serves to ensure maximal viral gene expression and to evade host immune response. The leader protein also inhibits host interferon regulatory factor 3 (IRF3) dimerization, thereby blocking the transcriptional activation of IFN genes. Binds to host RNase L thereby preventing its activation by 2'-5' oligoadenylates in order to counteract the antiviral interferon-inducible OAS/RNase L pathway. Inhibits the integrated stress response (ISR) in the infected cell. Inhibits the host EIF2AK2/PKR by rendering this kinase unable to detect double-stranded RNA. Also impairs host stress granule formation probably by acting on a step downstream of EIF2AK2/PKR activation. In terms of biological role, forms an icosahedral capsid of pseudo T=3 symmetry with capsid proteins VP2 and VP3. Together they form an icosahedral capsid composed of 60 copies of each VP1, VP2, and VP3, with a diameter of approximately 300 Angstroms. VP4 lies on the inner surface of the protein shell formed by VP1, VP2 and VP3. All the three latter proteins contain a beta-sheet structure called beta-barrel jelly roll. VP1 is situated at the 12 fivefold axes, whereas VP2 and VP3 are located at the quasi-sixfold axes. Functionally, lies on the inner surface of the capsid shell. After binding to the host receptor, the capsid undergoes conformational changes. Capsid protein VP4 is released, capsid protein VP1 N-terminus is externalized, and together, they shape a pore in the host membrane through which the viral genome is translocated into the host cell cytoplasm. After genome has been released, the channel shrinks. VP0 precursor is a component of immature procapsids. Its function is as follows. Involved in host translation shutoff by inhibiting cap-dependent mRNA translation. Nuclear localization is required for this function. The resulting inhibition of cellular protein synthesis serves to ensure maximal viral gene expression and to evade host immune response. Inhibits the phosphorylation of the leader protein. In terms of biological role, affects membrane integrity and causes an increase in membrane permeability. Functionally, associates with and induces structural rearrangements of intracellular membranes. It displays RNA-binding, nucleotide binding and NTPase activities. Serves as membrane anchor via its hydrophobic domain. Its function is as follows. Forms a primer, VPg-pU, which is utilized by the polymerase for the initiation of RNA chains. In terms of biological role, cysteine protease that generates mature viral proteins from the precursor polyprotein. In addition to its proteolytic activity, it binds to viral RNA, and thus influences viral genome replication. RNA and substrate cooperatively bind to the protease. Cleaves host PABP1, this cleavage is important for viral replication. Functionally, replicates the genomic and antigenomic RNAs by recognizing replications specific signals. Performs VPg uridylylation. The chain is Genome polyprotein from Mus musculus (Mouse).